The sequence spans 99 residues: Malonate decarboxylase acyl carrier protein (99 aa).

Ser25 is subject to O-(phosphoribosyl dephospho-coenzyme A)serine.

Post-translationally, covalently binds the prosthetic group of malonate decarboxylase.

Its subcellular location is the cytoplasm. In terms of biological role, subunit of malonate decarboxylase, it is an acyl carrier protein to which acetyl and malonyl thioester residues are bound via a 2'-(5''-phosphoribosyl)-3'-dephospho-CoA prosthetic group and turn over during the catalytic mechanism. In Klebsiella pneumoniae, this protein is Malonate decarboxylase acyl carrier protein (mdcC).